Consider the following 502-residue polypeptide: Arabinose import ATP-binding protein AraG (502 aa).

ABC transporter domains lie at 5–240 and 253–496; these read LEFS…MVGR and LGGI…LPDK. 37–44 is an ATP binding site; the sequence is GENGAGKS.

The protein belongs to the ABC transporter superfamily. Arabinose importer (TC 3.A.1.2.2) family. The complex is composed of two ATP-binding proteins (AraG), two transmembrane proteins (AraH) and a solute-binding protein (AraF).

The protein localises to the cell inner membrane. It catalyses the reaction L-arabinose(out) + ATP + H2O = L-arabinose(in) + ADP + phosphate + H(+). Its function is as follows. Part of the ABC transporter complex AraFGH involved in arabinose import. Responsible for energy coupling to the transport system. The chain is Arabinose import ATP-binding protein AraG from Rhizobium johnstonii (strain DSM 114642 / LMG 32736 / 3841) (Rhizobium leguminosarum bv. viciae).